The primary structure comprises 90 residues: DNA-binding protein HU-beta (90 aa).

This sequence belongs to the bacterial histone-like protein family. In terms of assembly, heterodimer of an alpha and a beta chain.

Its function is as follows. Histone-like DNA-binding protein which is capable of wrapping DNA to stabilize it, and thus to prevent its denaturation under extreme environmental conditions. The protein is DNA-binding protein HU-beta (hupB) of Escherichia coli O6:H1 (strain CFT073 / ATCC 700928 / UPEC).